A 329-amino-acid polypeptide reads, in one-letter code: NADH-quinone oxidoreductase subunit H (329 aa).

Transmembrane regions (helical) follow at residues 9-29 (LIKI…ATYI), 42-62 (GPCY…IKLF), 75-95 (FIFT…MAPI), 117-137 (IGFL…ILAG), 154-174 (IQLL…LMVV), 188-208 (GGFL…FLIA), 238-258 (LKWG…SFVI), 260-280 (IVFF…AILI), and 309-329 (WKIM…IILI).

This sequence belongs to the complex I subunit 1 family. In terms of assembly, NDH-1 is composed of 14 different subunits. Subunits NuoA, H, J, K, L, M, N constitute the membrane sector of the complex.

It localises to the cell inner membrane. The enzyme catalyses a quinone + NADH + 5 H(+)(in) = a quinol + NAD(+) + 4 H(+)(out). Its function is as follows. NDH-1 shuttles electrons from NADH, via FMN and iron-sulfur (Fe-S) centers, to quinones in the respiratory chain. The immediate electron acceptor for the enzyme in this species is believed to be ubiquinone. Couples the redox reaction to proton translocation (for every two electrons transferred, four hydrogen ions are translocated across the cytoplasmic membrane), and thus conserves the redox energy in a proton gradient. This subunit may bind ubiquinone. This Helicobacter pylori (strain G27) protein is NADH-quinone oxidoreductase subunit H.